The sequence spans 290 residues: Outer dense fiber protein 4 (290 aa).

A Phosphoserine modification is found at Ser28. Helical transmembrane passes span 44–64 (AQVVASEFSLVAFLLLLVMVF), 125–145 (PVFGVAKISFTLAIGLGFVLT), 164–184 (LIGIILSFCEVTLIFLTLLLF), and 201–221 (IGWSYFIGWLVLILYFTCGIL). Residues 247–290 (GPESLVSPSQTPSSQENSQESPKDDQKPSSPDKVVSPPQPDTTG) are disordered. Over residues 252–266 (VSPSQTPSSQENSQE) the composition is skewed to polar residues.

As to expression, expressed in testis.

The protein resides in the membrane. Component of the outer dense fibers (ODF) of spermatozoa which could be involved in sperm tail structure, sperm movement and general organization of cellular cytoskeleton. In Mus musculus (Mouse), this protein is Outer dense fiber protein 4 (Odf4).